The chain runs to 787 residues: Phenylalanine--tRNA ligase beta subunit (787 aa).

The 111-residue stretch at 39-149 (APAFAGVVIA…EDAPVGTNIR (111 aa)) folds into the tRNA-binding domain. The B5 domain occupies 400–475 (PEAKQVGLRL…RVYGYENIPD (76 aa)). Asp-453, Asp-459, Glu-462, and Glu-463 together coordinate Mg(2+). The FDX-ACB domain maps to 694-786 (SKFQPVRRDL…AATAAGARLR (93 aa)).

Belongs to the phenylalanyl-tRNA synthetase beta subunit family. Type 1 subfamily. In terms of assembly, tetramer of two alpha and two beta subunits. It depends on Mg(2+) as a cofactor.

The protein localises to the cytoplasm. It carries out the reaction tRNA(Phe) + L-phenylalanine + ATP = L-phenylalanyl-tRNA(Phe) + AMP + diphosphate + H(+). This chain is Phenylalanine--tRNA ligase beta subunit (pheT), found in Neisseria meningitidis serogroup B (strain ATCC BAA-335 / MC58).